A 444-amino-acid polypeptide reads, in one-letter code: N-succinylarginine dihydrolase (444 aa).

Substrate-binding positions include 19–28, N110, and 137–138; these read AGLSFGNVAS and HR. The active site involves E174. R214 serves as a coordination point for substrate. Residue H250 is part of the active site. Positions 252 and 362 each coordinate substrate. C368 acts as the Nucleophile in catalysis.

Belongs to the succinylarginine dihydrolase family. Homodimer.

It carries out the reaction N(2)-succinyl-L-arginine + 2 H2O + 2 H(+) = N(2)-succinyl-L-ornithine + 2 NH4(+) + CO2. The protein operates within amino-acid degradation; L-arginine degradation via AST pathway; L-glutamate and succinate from L-arginine: step 2/5. Its function is as follows. Catalyzes the hydrolysis of N(2)-succinylarginine into N(2)-succinylornithine, ammonia and CO(2). The chain is N-succinylarginine dihydrolase from Shewanella oneidensis (strain ATCC 700550 / JCM 31522 / CIP 106686 / LMG 19005 / NCIMB 14063 / MR-1).